Here is a 784-residue protein sequence, read N- to C-terminus: Lon protease (784 aa).

The Lon N-terminal domain maps to 11–204 (IPVLPLRDVV…YLMAMMESEI (194 aa)). Residue 356–363 (GPPGVGKT) coordinates ATP. One can recognise a Lon proteolytic domain in the interval 592–773 (ENRVGQVTGL…EEVLALALQN (182 aa)). Residues Ser-679 and Lys-722 contribute to the active site.

The protein belongs to the peptidase S16 family. Homohexamer. Organized in a ring with a central cavity.

The protein localises to the cytoplasm. It carries out the reaction Hydrolysis of proteins in presence of ATP.. Functionally, ATP-dependent serine protease that mediates the selective degradation of mutant and abnormal proteins as well as certain short-lived regulatory proteins. Required for cellular homeostasis and for survival from DNA damage and developmental changes induced by stress. Degrades polypeptides processively to yield small peptide fragments that are 5 to 10 amino acids long. Binds to DNA in a double-stranded, site-specific manner. This chain is Lon protease, found in Erwinia amylovora (Fire blight bacteria).